Reading from the N-terminus, the 394-residue chain is Trans-enoyl reductase fumoC (394 aa).

62–65 serves as a coordination point for NADP(+); that stretch reads VDGK. A substrate-binding site is contributed by 152–159; it reads ASLASVGM. Residues 224 to 227, Y242, and 289 to 290 contribute to the NADP(+) site; these read SSSS and LD. 309 to 313 is a binding site for substrate; sequence TLTQF. NADP(+) is bound at residue 378–379; the sequence is VK.

The protein belongs to the zinc-containing alcohol dehydrogenase family. Monomer.

The protein operates within secondary metabolite biosynthesis. Trans-enoyl reductase; part of the gene cluster that mediates the biosynthesis of fumosorinone, a 2-pyridone alkaloid that acts as an inhibitor of protein tyrosine phosphatase 1B which is implicated asa negative regulator of insulin receptor signaling and a potential drug target for the treatment of type II diabetes and other associated metabolic syndromes. The polyketide-amino acid backbone of fumosorinone is first assembled by the PKS-NRPS hybrid fumoS. The PKS modules condense one acetyl-CoA starter unit with 7 malonyl-CoA units, programmed C-methylations occurring after the first 3 and the sixth extensions, and cycles of full reduction occurring after the first 2 extensions. Because fumoS lacks a designated enoyl reductase (ER) domain, the required activity is provided the enoyl reductase fumoC. Upon formation of the polyketide backbone on the thiotemplate, the polyketide is transferred to the NRPS module and linked to tyrosine to produce the acyltetramic acid intermediate called prefumosorinone A. The cytochrome P450 monooxygenase fumoA then probably catalyzes an unprecedented oxidative ring expansion of prefumosorinone A to form prefumosorinone B which contains the 2-pyridone core of fumosorinone. The cytochrome P450 monooxygenase fumoB might hydroxylate the nitrogen of prefumosorinone B, but not the acyltetramic acid prefumosorinone A, to form fumosorinone. This Cordyceps fumosorosea (strain ARSEF 2679) (Isaria fumosorosea) protein is Trans-enoyl reductase fumoC.